The primary structure comprises 302 residues: Proline dehydrogenase 1 (302 aa).

Position 95 (Lys-95) interacts with substrate. Asp-129 is a catalytic residue. Residues Met-130 and Gln-158 each coordinate FAD. Arg-179 is a catalytic residue. FAD contacts are provided by residues 182–184 and 221–222; these read KGA and TH. Residue 283–284 participates in substrate binding; sequence RR.

The protein belongs to the proline dehydrogenase family. It depends on FAD as a cofactor.

It catalyses the reaction L-proline + a quinone = (S)-1-pyrroline-5-carboxylate + a quinol + H(+). It functions in the pathway amino-acid degradation; L-proline degradation into L-glutamate; L-glutamate from L-proline: step 1/2. Functionally, converts proline to delta-1-pyrroline-5-carboxylate. The chain is Proline dehydrogenase 1 (fadM) from Bacillus subtilis (strain 168).